A 267-amino-acid chain; its full sequence is Glutamate 5-kinase (267 aa).

K14 lines the ATP pocket. 3 residues coordinate substrate: S54, D141, and N157. Residues 177–178 and 219–225 contribute to the ATP site; these read SD and TGGMMSK.

The protein belongs to the glutamate 5-kinase family.

It localises to the cytoplasm. It carries out the reaction L-glutamate + ATP = L-glutamyl 5-phosphate + ADP. The protein operates within amino-acid biosynthesis; L-proline biosynthesis; L-glutamate 5-semialdehyde from L-glutamate: step 1/2. Catalyzes the transfer of a phosphate group to glutamate to form L-glutamate 5-phosphate. The sequence is that of Glutamate 5-kinase from Streptococcus thermophilus.